A 444-amino-acid polypeptide reads, in one-letter code: MRKVKPKLNLTSQTARIVNLSHDGRGIARVNGKATFIQGALPGEVVEFQYTRIKKDFDEGKLLSIVEPSTLRVEPKCPHYQMCGGCSLQHMSAEEQIRFKQSHLLDLLSRYGHTEPQSVLSPLTSHHWNYRNKARLSTRFVEKKQSTMVGFRERNNPRFITEINQCPILNSKIDTDIVHLRKLIDTMEDKHCIAQIEVAAGDNEVALIFRNLSPLTEQDELKIREFAQQFQYKVFLQPGGLDSVFCFYPSDAHAYLSYELPDYQITFQFHPNDFTQVNAELNRKMVTQAIQLMELKNSDIVLDLFCGLGNFSLPMAKHCSRVIGVEGNKNMVERAYMNAKSNHITNVDFYAANLDDVMEVRNLVNTSFSKVLIDPPRSGALEIVKQIDSIDPERIVYVSCNPITLARDTDILVNQKGYVLITAGVMDMFPHTAHVESIALFQKG.

One can recognise a TRAM domain in the interval 5–64 (KPKLNLTSQTARIVNLSHDGRGIARVNGKATFIQGALPGEVVEFQYTRIKKDFDEGKLLS). Residues Cys-77, Cys-83, Cys-86, and Cys-166 each coordinate [4Fe-4S] cluster. Gln-276, Phe-305, Asn-310, Glu-326, Asn-353, and Asp-374 together coordinate S-adenosyl-L-methionine. Cys-400 acts as the Nucleophile in catalysis.

The protein belongs to the class I-like SAM-binding methyltransferase superfamily. RNA M5U methyltransferase family. RlmD subfamily.

The catalysed reaction is uridine(1939) in 23S rRNA + S-adenosyl-L-methionine = 5-methyluridine(1939) in 23S rRNA + S-adenosyl-L-homocysteine + H(+). In terms of biological role, catalyzes the formation of 5-methyl-uridine at position 1939 (m5U1939) in 23S rRNA. This is 23S rRNA (uracil(1939)-C(5))-methyltransferase RlmD from Legionella pneumophila (strain Corby).